A 169-amino-acid polypeptide reads, in one-letter code: Probable phospholipid hydroperoxide glutathione peroxidase (169 aa).

Cys43 is a catalytic residue.

The protein belongs to the glutathione peroxidase family. Monomer. Has a tendency to form higher mass oligomers. Interacts with FUNDC1; this interaction promotes GPX4 recruitment into mitochondria through TOM/TIM complex where it is degraded by mitophagy.

It localises to the cytoplasm. The enzyme catalyses a hydroperoxy polyunsaturated fatty acid + 2 glutathione = a hydroxy polyunsaturated fatty acid + glutathione disulfide + H2O. Functionally, protects cells and enzymes from oxidative damage, by catalyzing the reduction of hydrogen peroxide, lipid peroxides and organic hydroperoxide, by glutathione. This chain is Probable phospholipid hydroperoxide glutathione peroxidase (GPXle-1), found in Solanum lycopersicum (Tomato).